The following is a 447-amino-acid chain: Tubulin beta-1 chain (447 aa).

Gln11 is a binding site for GTP. Residue Ser40 is modified to Phosphoserine. 7 residues coordinate GTP: Glu69, Ser138, Gly142, Thr143, Gly144, Asn204, and Asn226. Glu69 is a binding site for Mg(2+). Ser339 is modified (phosphoserine). The segment at 427–447 (EATADEDAEFEEEQEAEVDEN) is disordered. Residues 429 to 447 (TADEDAEFEEEQEAEVDEN) are compositionally biased toward acidic residues.

Belongs to the tubulin family. Dimer of alpha and beta chains. A typical microtubule is a hollow water-filled tube with an outer diameter of 25 nm and an inner diameter of 15 nM. Alpha-beta heterodimers associate head-to-tail to form protofilaments running lengthwise along the microtubule wall with the beta-tubulin subunit facing the microtubule plus end conferring a structural polarity. Microtubules usually have 13 protofilaments but different protofilament numbers can be found in some organisms and specialized cells. Interacts with mgr and Vhl. Mg(2+) serves as cofactor.

The protein resides in the cytoplasm. It is found in the cytoskeleton. In terms of biological role, tubulin is the major constituent of microtubules, a cylinder consisting of laterally associated linear protofilaments composed of alpha- and beta-tubulin heterodimers. Microtubules grow by the addition of GTP-tubulin dimers to the microtubule end, where a stabilizing cap forms. Below the cap, tubulin dimers are in GDP-bound state, owing to GTPase activity of alpha-tubulin. This Drosophila melanogaster (Fruit fly) protein is Tubulin beta-1 chain (betaTub56D).